We begin with the raw amino-acid sequence, 885 residues long: Pyruvate, phosphate dikinase (885 aa).

The segment at 1–342 (MQRVYAFEDG…LYMLQTRNGK (342 aa)) is N-terminal. Arg-91 serves as a coordination point for ATP. The interval 343-399 (MNATATVRTGVDMVEEGLITKEQAIMRIAPQSVDQLLHKNMPANYAEAPLVKGLPAS) is linker 1. The segment at 400–497 (PGAATGAVVF…EVHEGDILTI (98 aa)) is central. The Tele-phosphohistidine intermediate role is filled by His-454. The segment at 498-533 (DGSTGCVYKGEVPLEEPQVGSGYFGTILKWANEIKK) is linker 2. The C-terminal stretch occupies residues 534–885 (IGVFANADLP…QAQIRHPREN (352 aa)). Residues Arg-561, Arg-617, Glu-752, Gly-773, Thr-774, Asn-775, and Asp-776 each contribute to the substrate site. Glu-752 provides a ligand contact to Mg(2+). Position 776 (Asp-776) interacts with Mg(2+). Cys-839 (proton donor) is an active-site residue.

This sequence belongs to the PEP-utilizing enzyme family. As to quaternary structure, homodimer. Requires Mg(2+) as cofactor.

It catalyses the reaction pyruvate + phosphate + ATP = phosphoenolpyruvate + AMP + diphosphate + H(+). Its function is as follows. Catalyzes the dephosphorylation of phosphoenolpyruvate and diphosphate to produce ATP. The sequence is that of Pyruvate, phosphate dikinase from Entamoeba histolytica (strain ATCC 30459 / HM-1:IMSS / ABRM).